The chain runs to 346 residues: Low-temperature-induced cysteine proteinase (346 aa).

Positions 1 to 17 (KLSKNKSDRYLPKVGDS) are cleaved as a propeptide — activation peptide. Disulfide bonds link C39/C81, C73/C114, C172/C223, C256/C268, and C262/C283. The active site involves C42. Catalysis depends on residues H178 and N198. N215 is a glycosylation site (N-linked (GlcNAc...) asparagine). Positions 238–346 (NPPKPAPSPP…FGNGGKKSSS (109 aa)) are cleaved as a propeptide — removed in mature form.

It belongs to the peptidase C1 family.

This Solanum lycopersicum (Tomato) protein is Low-temperature-induced cysteine proteinase.